The primary structure comprises 392 residues: Anhydro-N-acetylmuramic acid kinase (392 aa).

22–29 serves as a coordination point for ATP; sequence GTSMDGVD.

This sequence belongs to the anhydro-N-acetylmuramic acid kinase family.

The catalysed reaction is 1,6-anhydro-N-acetyl-beta-muramate + ATP + H2O = N-acetyl-D-muramate 6-phosphate + ADP + H(+). The protein operates within amino-sugar metabolism; 1,6-anhydro-N-acetylmuramate degradation. It functions in the pathway cell wall biogenesis; peptidoglycan recycling. In terms of biological role, catalyzes the specific phosphorylation of 1,6-anhydro-N-acetylmuramic acid (anhMurNAc) with the simultaneous cleavage of the 1,6-anhydro ring, generating MurNAc-6-P. Is required for the utilization of anhMurNAc either imported from the medium or derived from its own cell wall murein, and thus plays a role in cell wall recycling. The protein is Anhydro-N-acetylmuramic acid kinase of Burkholderia pseudomallei (strain 1106a).